The chain runs to 162 residues: ATP synthase subunit b 1 (162 aa).

Residues 1–21 (MLLTAEFWVAVAFVAFLVIVW) form a helical membrane-spanning segment.

This sequence belongs to the ATPase B chain family. In terms of assembly, F-type ATPases have 2 components, F(1) - the catalytic core - and F(0) - the membrane proton channel. F(1) has five subunits: alpha(3), beta(3), gamma(1), delta(1), epsilon(1). F(0) has three main subunits: a(1), b(2) and c(10-14). The alpha and beta chains form an alternating ring which encloses part of the gamma chain. F(1) is attached to F(0) by a central stalk formed by the gamma and epsilon chains, while a peripheral stalk is formed by the delta and b chains.

It localises to the cell inner membrane. Functionally, f(1)F(0) ATP synthase produces ATP from ADP in the presence of a proton or sodium gradient. F-type ATPases consist of two structural domains, F(1) containing the extramembraneous catalytic core and F(0) containing the membrane proton channel, linked together by a central stalk and a peripheral stalk. During catalysis, ATP synthesis in the catalytic domain of F(1) is coupled via a rotary mechanism of the central stalk subunits to proton translocation. In terms of biological role, component of the F(0) channel, it forms part of the peripheral stalk, linking F(1) to F(0). The polypeptide is ATP synthase subunit b 1 (Methylorubrum populi (strain ATCC BAA-705 / NCIMB 13946 / BJ001) (Methylobacterium populi)).